The sequence spans 349 residues: Alanine racemase (349 aa).

Lysine 35 acts as the Proton acceptor; specific for D-alanine in catalysis. At lysine 35 the chain carries N6-(pyridoxal phosphate)lysine. Arginine 130 contacts substrate. Tyrosine 244 functions as the Proton acceptor; specific for L-alanine in the catalytic mechanism. Methionine 292 provides a ligand contact to substrate.

The protein belongs to the alanine racemase family. Pyridoxal 5'-phosphate is required as a cofactor.

The catalysed reaction is L-alanine = D-alanine. It participates in amino-acid biosynthesis; D-alanine biosynthesis; D-alanine from L-alanine: step 1/1. Catalyzes the interconversion of L-alanine and D-alanine. May also act on other amino acids. The protein is Alanine racemase (alr) of Dinoroseobacter shibae (strain DSM 16493 / NCIMB 14021 / DFL 12).